A 534-amino-acid chain; its full sequence is Melanopsin-B (534 aa).

The Extracellular portion of the chain corresponds to 1–32 (MDLGKTVEYGTHRQDAIAQIDVPDQVLYTIGS). The helical transmembrane segment at 33-53 (FILIIGSVGIIGNMLVLYAFY) threads the bilayer. Topologically, residues 54-64 (RNKKLRTAPNY) are cytoplasmic. Residues 65 to 85 (FIINLAISDFLMSATQAPVCF) traverse the membrane as a helical segment. Over 86–102 (LSSLHREWILGDIGCNV) the chain is Extracellular. Cys-100 and Cys-178 are disulfide-bonded. A helical transmembrane segment spans residues 103–123 (YAFCGALFGITSMMTLLAISI). Residues 124–146 (NRYIVITKPLQSIQWSSKKRTSQ) are Cytoplasmic-facing. Residues 147-167 (IIVLVWMYSLMWSLAPLLGWS) form a helical membrane-spanning segment. Residues 168–198 (SYVPEGLRISCTWDYVTSTMSNRSYTMMLCC) are Extracellular-facing. The N-linked (GlcNAc...) asparagine glycan is linked to Asn-189. Residues 199 to 219 (CVFFIPLIVISHCYLFMFLAI) form a helical membrane-spanning segment. At 220-250 (RSTGRNVQKLGSYGRQSFLSQSMKNEWKMAK) the chain is on the cytoplasmic side. The chain crosses the membrane as a helical span at residues 251-271 (IAFVIIIVFVLSWSPYACVTL). The Extracellular segment spans residues 272–286 (IAWAGHGKSLTPYSK). A helical membrane pass occupies residues 287-307 (TVPAVIAKASAIYNPIIYGII). Lys-294 is subject to N6-(retinylidene)lysine. Topologically, residues 308–534 (HPKYRETIHK…LYEVVERFLS (227 aa)) are cytoplasmic. Positions 478–501 (SNISETKEEHDNNSEEKSKRTEEE) are disordered. A compositionally biased stretch (basic and acidic residues) spans 482-499 (ETKEEHDNNSEEKSKRTE).

The protein belongs to the G-protein coupled receptor 1 family. Opsin subfamily. In terms of tissue distribution, highest level in the iris, high level in the inner nuclear layer, possibly in horizontal cells, and lowest level in retinal pigment epithelium. Expressed in melanophore cells of the skin.

It is found in the cell membrane. Its function is as follows. Photoreceptor implicated in non-image-forming responses to light. May be able to isomerize covalently bound all-trans retinal back to 11-cis retinal. This is Melanopsin-B from Xenopus laevis (African clawed frog).